The sequence spans 180 residues: Geminin homolog (180 aa).

Over residues 1–27 (MSRIGLQQLNNSARNSPFGSEKATGTK) the composition is skewed to polar residues. Positions 1-29 (MSRIGLQQLNNSARNSPFGSEKATGTKQI) are disordered.

The protein belongs to the geminin family. As to quaternary structure, homodimer. Interacts with cdt-1; the interaction most likely inhibits the ability of cdt-1 to load the mini-chromosome maintenance (MCM) complex onto DNA and therefore reduces DNA replication licensing activity. Interacts with nob-1 and ceh-32.

It localises to the cytoplasm. The protein resides in the nucleus. In terms of biological role, inhibits DNA replication by binding to the DNA replication licensing factor cdt-1. Its interaction with cdt-1 prevents the cdt-1 loading of the mini-chromosome maintenance (MCM) complex onto DNA and therefore DNA replication licencing. The polypeptide is Geminin homolog (Caenorhabditis elegans).